A 133-amino-acid polypeptide reads, in one-letter code: Small ribosomal subunit protein uS15 (133 aa).

It belongs to the universal ribosomal protein uS15 family. Part of the 30S ribosomal subunit.

This chain is Small ribosomal subunit protein uS15, found in Methanosphaera stadtmanae (strain ATCC 43021 / DSM 3091 / JCM 11832 / MCB-3).